Here is a 344-residue protein sequence, read N- to C-terminus: tRNA N6-adenosine threonylcarbamoyltransferase (344 aa).

The Fe cation site is built by His112 and His116. Substrate-binding positions include 134–138, Asp167, Gly180, and Asn280; that span reads LASGG. Asp308 contacts Fe cation.

This sequence belongs to the KAE1 / TsaD family. The cofactor is Fe(2+).

It localises to the cytoplasm. The catalysed reaction is L-threonylcarbamoyladenylate + adenosine(37) in tRNA = N(6)-L-threonylcarbamoyladenosine(37) in tRNA + AMP + H(+). In terms of biological role, required for the formation of a threonylcarbamoyl group on adenosine at position 37 (t(6)A37) in tRNAs that read codons beginning with adenine. Is involved in the transfer of the threonylcarbamoyl moiety of threonylcarbamoyl-AMP (TC-AMP) to the N6 group of A37, together with TsaE and TsaB. TsaD likely plays a direct catalytic role in this reaction. This Rickettsia peacockii (strain Rustic) protein is tRNA N6-adenosine threonylcarbamoyltransferase.